A 579-amino-acid polypeptide reads, in one-letter code: Keratinocyte proline-rich protein (579 aa).

The residue at position 394 (S394) is a Phosphoserine. A disordered region spans residues 526–579 (EAPYCGPSSYNQGQESGAGCGPGDVFPERRGQDGHGDQGNAFAGVKGEAKSAYF). A compositionally biased stretch (basic and acidic residues) spans 551 to 561 (FPERRGQDGHG).

As to expression, expressed in the upper layer of epidermis and psoriasis (at protein level). Expressed in the upper layer of epidermis and psoriasis.

Its subcellular location is the cytoplasm. The chain is Keratinocyte proline-rich protein (KPRP) from Homo sapiens (Human).